The sequence spans 306 residues: Curved DNA-binding protein (306 aa).

The 65-residue stretch at 5–69 (DYYAIMGVKP…QRRAEYDQMW (65 aa)) folds into the J domain.

It is found in the cytoplasm. It localises to the nucleoid. Functionally, DNA-binding protein that preferentially recognizes a curved DNA sequence. It is probably a functional analog of DnaJ; displays overlapping activities with DnaJ, but functions under different conditions, probably acting as a molecular chaperone in an adaptive response to environmental stresses other than heat shock. Lacks autonomous chaperone activity; binds native substrates and targets them for recognition by DnaK. Its activity is inhibited by the binding of CbpM. The protein is Curved DNA-binding protein of Escherichia coli O127:H6 (strain E2348/69 / EPEC).